The sequence spans 277 residues: Large ribosomal subunit protein mL46 (277 aa).

Residue Lys-228 is modified to N6-acetyllysine.

It belongs to the mitochondrion-specific ribosomal protein mL46 family. As to quaternary structure, component of the mitochondrial ribosome large subunit (39S) which comprises a 16S rRNA and about 50 distinct proteins.

The protein localises to the mitochondrion. This is Large ribosomal subunit protein mL46 (MRPL46) from Bos taurus (Bovine).